The chain runs to 181 residues: Large ribosomal subunit protein uL5 (181 aa).

This sequence belongs to the universal ribosomal protein uL5 family. As to quaternary structure, part of the 50S ribosomal subunit; part of the 5S rRNA/L5/L18/L25 subcomplex. Contacts the 5S rRNA and the P site tRNA. Forms a bridge to the 30S subunit in the 70S ribosome.

This is one of the proteins that bind and probably mediate the attachment of the 5S RNA into the large ribosomal subunit, where it forms part of the central protuberance. In the 70S ribosome it contacts protein S13 of the 30S subunit (bridge B1b), connecting the 2 subunits; this bridge is implicated in subunit movement. Contacts the P site tRNA; the 5S rRNA and some of its associated proteins might help stabilize positioning of ribosome-bound tRNAs. This is Large ribosomal subunit protein uL5 from Helicobacter pylori (strain Shi470).